Reading from the N-terminus, the 764-residue chain is 1,4-alpha-glucan branching enzyme GlgB (764 aa).

D434 (nucleophile) is an active-site residue. The active-site Proton donor is the E487.

Belongs to the glycosyl hydrolase 13 family. GlgB subfamily. Monomer.

It catalyses the reaction Transfers a segment of a (1-&gt;4)-alpha-D-glucan chain to a primary hydroxy group in a similar glucan chain.. The protein operates within glycan biosynthesis; glycogen biosynthesis. In terms of biological role, catalyzes the formation of the alpha-1,6-glucosidic linkages in glycogen by scission of a 1,4-alpha-linked oligosaccharide from growing alpha-1,4-glucan chains and the subsequent attachment of the oligosaccharide to the alpha-1,6 position. This chain is 1,4-alpha-glucan branching enzyme GlgB, found in Trichormus variabilis (strain ATCC 29413 / PCC 7937) (Anabaena variabilis).